We begin with the raw amino-acid sequence, 545 residues long: CTP synthase (545 aa).

Residues 1 to 266 form an amidoligase domain region; that stretch reads MTTNYIFVTG…DDYICKRFSL (266 aa). Ser-14 provides a ligand contact to CTP. A UTP-binding site is contributed by Ser-14. ATP contacts are provided by residues 15-20 and Asp-72; that span reads SLGKGI. The Mg(2+) site is built by Asp-72 and Glu-140. Residues 147 to 149, 187 to 192, and Lys-223 contribute to the CTP site; these read DIE and KTKPTQ. UTP contacts are provided by residues 187 to 192 and Lys-223; that span reads KTKPTQ. Residue 239 to 241 coordinates ATP; it reads KDV. The 252-residue stretch at 291–542 folds into the Glutamine amidotransferase type-1 domain; that stretch reads TIGMVGKYIE…VKAASEYQKR (252 aa). Residue Gly-352 participates in L-glutamine binding. Cys-379 acts as the Nucleophile; for glutamine hydrolysis in catalysis. Residues 380–383, Glu-403, and Arg-470 each bind L-glutamine; that span reads LGMQ. Residues His-515 and Glu-517 contribute to the active site.

It belongs to the CTP synthase family. As to quaternary structure, homotetramer.

It catalyses the reaction UTP + L-glutamine + ATP + H2O = CTP + L-glutamate + ADP + phosphate + 2 H(+). The catalysed reaction is L-glutamine + H2O = L-glutamate + NH4(+). It carries out the reaction UTP + NH4(+) + ATP = CTP + ADP + phosphate + 2 H(+). The protein operates within pyrimidine metabolism; CTP biosynthesis via de novo pathway; CTP from UDP: step 2/2. With respect to regulation, allosterically activated by GTP, when glutamine is the substrate; GTP has no effect on the reaction when ammonia is the substrate. The allosteric effector GTP functions by stabilizing the protein conformation that binds the tetrahedral intermediate(s) formed during glutamine hydrolysis. Inhibited by the product CTP, via allosteric rather than competitive inhibition. In terms of biological role, catalyzes the ATP-dependent amination of UTP to CTP with either L-glutamine or ammonia as the source of nitrogen. Regulates intracellular CTP levels through interactions with the four ribonucleotide triphosphates. The sequence is that of CTP synthase from Klebsiella pneumoniae subsp. pneumoniae (strain ATCC 700721 / MGH 78578).